The primary structure comprises 123 residues: Small ribosomal subunit protein uS12c (123 aa).

This sequence belongs to the universal ribosomal protein uS12 family. In terms of assembly, part of the 30S ribosomal subunit.

The protein localises to the plastid. Its subcellular location is the chloroplast. Functionally, with S4 and S5 plays an important role in translational accuracy. Located at the interface of the 30S and 50S subunits. The protein is Small ribosomal subunit protein uS12c (rps12) of Marchantia polymorpha (Common liverwort).